The chain runs to 956 residues: Phosphatidylinositol 4-kinase PIK1a (956 aa).

A PIK helical domain is found at 1-120; that stretch reads MPVAPHELRD…QTVRKFINKL (120 aa). Residues 545 to 573 are disordered; sequence SRDWAKSTPGSPVARSSQEDEKFYGNVSS. A PI3K/PI4K catalytic domain is found at 658 to 939; sequence EDWNEKKHRI…YLIEKSVGSM (282 aa). The segment at 664–670 is G-loop; that stretch reads KHRIRKS. The interval 805–813 is catalytic loop; sequence QIKDRHNGN. The interval 824 to 848 is activation loop; sequence HIDFGFLLSNSPGSVGFEAAPFKLT.

The protein belongs to the PI3/PI4-kinase family. Type III PI4K subfamily.

It is found in the nucleus. It catalyses the reaction a 1,2-diacyl-sn-glycero-3-phospho-(1D-myo-inositol) + ATP = a 1,2-diacyl-sn-glycero-3-phospho-(1D-myo-inositol 4-phosphate) + ADP + H(+). Functionally, acts on phosphatidylinositol (PI) in the first committed step in the production of the second messenger inositol 1,4,5,-trisphosphate. This Candida albicans (strain SC5314 / ATCC MYA-2876) (Yeast) protein is Phosphatidylinositol 4-kinase PIK1a (PIKA).